The sequence spans 223 residues: MTQDQLKQAVAQAAVDLILPKLDDKSIVGVGTGSTANCFIDALALHKGTFDGAVASSEATAARLKGHGIPVYELNTVSDLEFYIDGADESDEHLNLIKGGGAALTREKIVAAVAKTFICIADASKLVPVLGNFPLPVEVIPMARSHVARELVKLGGDPVYREGVITDNGNIILDVHNMQITNPVELESQINAIVGVVTNGLFAARPADVLLLGTAEGVKTLKA.

Substrate-binding positions include 32 to 35 (TGST), 85 to 88 (DGAD), and 98 to 101 (KGGG). The Proton acceptor role is filled by Glu-107. A substrate-binding site is contributed by Lys-125.

Belongs to the ribose 5-phosphate isomerase family. Homodimer.

It carries out the reaction aldehydo-D-ribose 5-phosphate = D-ribulose 5-phosphate. It functions in the pathway carbohydrate degradation; pentose phosphate pathway; D-ribose 5-phosphate from D-ribulose 5-phosphate (non-oxidative stage): step 1/1. Its function is as follows. Catalyzes the reversible conversion of ribose-5-phosphate to ribulose 5-phosphate. This is Ribose-5-phosphate isomerase A from Pseudomonas fluorescens (strain ATCC BAA-477 / NRRL B-23932 / Pf-5).